Here is a 1023-residue protein sequence, read N- to C-terminus: 2-oxoglutarate dehydrogenase complex component E1 (1023 aa).

A mitochondrion-targeting transit peptide spans Met1–Tyr40. Lys74 carries the N6-succinyllysine modification. Ser100 bears the Phosphoserine mark. Ca(2+)-binding residues include His143, Asp156, and Asp158. Residue Arg312 coordinates thiamine diphosphate. The residue at position 401 (Lys401) is an N6-acetyllysine. Thiamine diphosphate is bound by residues Asp411, Asn444, and Ile446. Mg(2+) is bound by residues Asp411, Asn444, and Ile446. Lys534 participates in a covalent cross-link: Glycyl lysine isopeptide (Lys-Gly) (interchain with G-Cter in ubiquitin). The residue at position 564 (Lys564) is an N6-succinyllysine. A thiamine diphosphate-binding site is contributed by Gln676. At Lys970 the chain carries N6-acetyllysine.

This sequence belongs to the alpha-ketoglutarate dehydrogenase family. As to quaternary structure, homodimer. The 2-oxoglutarate dehydrogenase complex is composed of OGDH (2-oxoglutarate dehydrogenase; E1), DLST (dihydrolipoamide succinyltransferase; E2), DLD (dihydrolipoamide dehydrogenase; E3) and the assembly factor KGD4. It contains multiple copies of the three enzymatic components (E1, E2 and E3). In the nucleus, the 2-oxoglutarate dehydrogenase complex associates with KAT2A. Interacts with ABHD11; this interaction maintains the functional lipoylation of the 2-oxoglutarate dehydrogenase complex. It depends on thiamine diphosphate as a cofactor. Requires Mg(2+) as cofactor.

The protein resides in the mitochondrion. The protein localises to the nucleus. It carries out the reaction N(6)-[(R)-lipoyl]-L-lysyl-[protein] + 2-oxoglutarate + H(+) = N(6)-[(R)-S(8)-succinyldihydrolipoyl]-L-lysyl-[protein] + CO2. Calcium ions and ADP stimulate, whereas ATP and NADH reduce catalytic activity. Functionally, 2-oxoglutarate dehydrogenase (E1o) component of the 2-oxoglutarate dehydrogenase complex (OGDHC). Participates in the first step, rate limiting for the overall conversion of 2-oxoglutarate to succinyl-CoA and CO(2) catalyzed by the whole OGDHC. Catalyzes the irreversible decarboxylation of 2-oxoglutarate (alpha-ketoglutarate) via the thiamine diphosphate (ThDP) cofactor and subsequent transfer of the decarboxylated acyl intermediate on an oxidized dihydrolipoyl group that is covalently amidated to the E2 enzyme (dihydrolipoyllysine-residue succinyltransferase or DLST). Plays a key role in the Krebs (citric acid) cycle, which is a common pathway for oxidation of fuel molecules, including carbohydrates, fatty acids, and amino acids. Can catalyze the decarboxylation of 2-oxoadipate in vitro, but at a much lower rate than 2-oxoglutarate. Mainly active in the mitochondrion. A fraction of the 2-oxoglutarate dehydrogenase complex also localizes in the nucleus and is required for lysine succinylation of histones: associates with KAT2A on chromatin and provides succinyl-CoA to histone succinyltransferase KAT2A. This chain is 2-oxoglutarate dehydrogenase complex component E1, found in Bos taurus (Bovine).